Consider the following 447-residue polypeptide: Cobyrinate a,c-diamide synthase (447 aa).

Residues 252–439 form the GATase cobBQ-type domain; it reads KIAVAFDESF…AHQHCIGNPY (188 aa). Cysteine 331 serves as the catalytic Nucleophile.

It belongs to the CobB/CbiA family. The cofactor is Mg(2+).

It catalyses the reaction cob(II)yrinate + 2 L-glutamine + 2 ATP + 2 H2O = cob(II)yrinate a,c diamide + 2 L-glutamate + 2 ADP + 2 phosphate + 2 H(+). The catalysed reaction is Ni-sirohydrochlorin + 2 L-glutamine + 2 ATP + 2 H2O = Ni-sirohydrochlorin a,c-diamide + 2 L-glutamate + 2 ADP + 2 phosphate + 2 H(+). It functions in the pathway cofactor biosynthesis; adenosylcobalamin biosynthesis; cob(II)yrinate a,c-diamide from sirohydrochlorin (anaerobic route): step 10/10. Functionally, catalyzes the ATP-dependent amidation of the two carboxylate groups at positions a and c of cobyrinate, using either L-glutamine or ammonia as the nitrogen source. Involved in the biosynthesis of the unique nickel-containing tetrapyrrole coenzyme F430, the prosthetic group of methyl-coenzyme M reductase (MCR), which plays a key role in methanogenesis and anaerobic methane oxidation. Catalyzes the ATP-dependent amidation of the two carboxylate groups at positions a and c of Ni-sirohydrochlorin, using L-glutamine or ammonia as the nitrogen source. This Methanococcus maripaludis (strain C5 / ATCC BAA-1333) protein is Cobyrinate a,c-diamide synthase.